Here is a 572-residue protein sequence, read N- to C-terminus: Proline--tRNA ligase (572 aa).

The protein belongs to the class-II aminoacyl-tRNA synthetase family. ProS type 1 subfamily. In terms of assembly, homodimer.

It is found in the cytoplasm. It carries out the reaction tRNA(Pro) + L-proline + ATP = L-prolyl-tRNA(Pro) + AMP + diphosphate. Functionally, catalyzes the attachment of proline to tRNA(Pro) in a two-step reaction: proline is first activated by ATP to form Pro-AMP and then transferred to the acceptor end of tRNA(Pro). As ProRS can inadvertently accommodate and process non-cognate amino acids such as alanine and cysteine, to avoid such errors it has two additional distinct editing activities against alanine. One activity is designated as 'pretransfer' editing and involves the tRNA(Pro)-independent hydrolysis of activated Ala-AMP. The other activity is designated 'posttransfer' editing and involves deacylation of mischarged Ala-tRNA(Pro). The misacylated Cys-tRNA(Pro) is not edited by ProRS. The protein is Proline--tRNA ligase of Escherichia coli O157:H7.